The chain runs to 470 residues: MAGGVTGGGSATWSDRFEQGLHPAIERFNASIGFDITLLQEDLDGSMAHARMLAQCGVISEAEADQLCGGLEQIRAEAAEGRFQPGLDDEDVHFAVERRLIALLGPVGKKLHTGRSRNDQVGTDLRLWLRRRIDELIPQVKTFQRALLRQALSHRRTLIPGYTHLQRAQPVCLAHHLLAYVEMLERDRQRLEDVRKRVNVSPLGAAALAGTPVPIDRRSTAAALGFDGLYANSLDAVSDRDFAVEFSAAISLVMVHLSRLGEEVIFWASEECGFVRLSDRCATGSSLMPQKKNPDVPELVRGKCGRVFGHLQGLLTMIKGLPLAYNKDFQEDKEALFDVVSTGSQCLEAMTILMDEGLSFREDRLEAAVAADFSNATDVADYLVARQVPFREAYQIVGSVVKQCLSEGVLLRDLSLERWQSFHPAIESDLYDALAPRQVVAARTSEGGTGFDRVEEQLSAWSERLDLANG.

This sequence belongs to the lyase 1 family. Argininosuccinate lyase subfamily.

The protein resides in the cytoplasm. It catalyses the reaction 2-(N(omega)-L-arginino)succinate = fumarate + L-arginine. Its pathway is amino-acid biosynthesis; L-arginine biosynthesis; L-arginine from L-ornithine and carbamoyl phosphate: step 3/3. This Synechococcus sp. (strain WH7803) protein is Argininosuccinate lyase.